Here is a 714-residue protein sequence, read N- to C-terminus: Macrophage-expressed gene 1 protein (714 aa).

Positions 1–19 (MNSFMAIALIWMMIACAEA) are cleaved as a signal peptide. The MACPF domain occupies 30–345 (GFQTCKDTLK…TAVRHYYTFN (316 aa)). A disulfide bridge connects residues Cys34 and Cys70. A run of 2 beta stranded transmembrane segments spans residues 113-120 (FSINTELS) and 127-132 (GKFSTE). N-linked (GlcNAc...) asparagine glycosylation is present at Asn185. 2 beta stranded membrane passes run 235–244 (TVTASAGIAF) and 248–256 (VNFKVETDH). A glycan (N-linked (GlcNAc...) asparagine) is linked at Asn269. Cys350 and Cys369 are joined by a disulfide. Residue Asn375 is glycosylated (N-linked (GlcNAc...) asparagine). 5 cysteine pairs are disulfide-bonded: Cys385-Cys394, Cys432-Cys446, Cys436-Cys442, Cys531-Cys569, and Cys554-Cys574. The interval 410–653 (PSGYTPVHLL…GDGNGMSGGE (244 aa)) is P2. The chain crosses the membrane as a helical span at residues 654–674 (AAGVTLGVIIALGIVITLAIY). Positions 690–714 (EQESLVGSFATDASPPNGEQDPCPA) are disordered.

Belongs to the MPEG1 family. Homooligomer; predominantly forms a homooligomeric arc-shaped pore complex instead of complete rings of 16 subunits. In terms of processing, proteolytically processed in two steps to generate the Macrophage-expressed gene 1 protein, processed form: cleaved by trypsin in proximity of the helical transmembrane domain releases the ectodomain into the lysosomal lumen to orient the pore-forming domain toward the endogenous membranes, and processed by the asparagine endopeptidase (LGMN). Proteolytic processing in antigen-containing vesicles is pH-dependent. Monoubiquitinated in response to bacterial infection; ubiquitination is required for vesicular localization and antibacterial activity and can be blocked by bacterial cell cycle inhibiting factor (cif).

It is found in the cytoplasmic vesicle membrane. Its subcellular location is the cytoplasmic vesicle. The protein localises to the phagosome membrane. With respect to regulation, forms arc- and ring-shaped pre-pores on top of the membrane at neutral to slightly acidic pH conditions and converts to pores upon acidification. Undergoes transition from the pre-pore to the pore in a processive clockwise hand-over-hand process. In the pore state, 2 alpha-helical regions refold into transmembrane hairpins (TMH1 and TMH2) in each protomer that form in the ensemble complex giant beta-barrel transmembrane pores. In terms of biological role, pore-forming protein involved in both innate and adaptive immunity. Plays a central role in antigen cross-presentation in dendritic cells by forming a pore in antigen-containing compartments, thereby promoting delivery of antigens for cross-presentation. Also involved in innate immune response following bacterial infection; shows antibacterial activity against a wide spectrum of Gram-positive, Gram-negative and acid-fast bacteria. Reduces the viability of the intracytosolic pathogen L.monocytogenes by inhibiting acidification of the phagocytic vacuole of host cells which restricts bacterial translocation from the vacuole to the cytosol. Required for the antibacterial activity of reactive oxygen species and nitric oxide. Pore-forming protein that plays a central role in antigen cross-presentation in dendritic cells by mediating delivery of antigens for cross-presentation. Dendritic cells bridge innate and adaptive immunity by capturing exogenous antigens on MHC class-I molecules and presenting them to naive CD8(+) T-cells. Acts by forming a pore in antigen-containing compartments, promoting the release of antigens into the cytosol, enabling generation of MHCI:peptide complexes and T-cell priming. The polypeptide is Macrophage-expressed gene 1 protein (Mpeg1) (Rattus norvegicus (Rat)).